A 1091-amino-acid chain; its full sequence is ATP-dependent helicase/deoxyribonuclease subunit B (1091 aa).

The protein belongs to the helicase family. AddB/RexB type 2 subfamily. As to quaternary structure, heterodimer of AddA and RexB. Requires Mg(2+) as cofactor.

Its function is as follows. The heterodimer acts as both an ATP-dependent DNA helicase and an ATP-dependent, dual-direction single-stranded exonuclease. Recognizes the chi site generating a DNA molecule suitable for the initiation of homologous recombination. This subunit has 5' -&gt; 3' nuclease activity but not helicase activity. The sequence is that of ATP-dependent helicase/deoxyribonuclease subunit B from Streptococcus pneumoniae (strain Hungary19A-6).